A 159-amino-acid polypeptide reads, in one-letter code: 2-C-methyl-D-erythritol 2,4-cyclodiphosphate synthase (159 aa).

2 residues coordinate a divalent metal cation: aspartate 8 and histidine 10. 4-CDP-2-C-methyl-D-erythritol 2-phosphate-binding positions include 8–10 and 34–35; these read DVH and HS. Histidine 42 serves as a coordination point for a divalent metal cation. 4-CDP-2-C-methyl-D-erythritol 2-phosphate contacts are provided by residues 56–58, 132–135, and arginine 142; these read DIG and TTTE.

The protein belongs to the IspF family. Homotrimer. A divalent metal cation is required as a cofactor.

It catalyses the reaction 4-CDP-2-C-methyl-D-erythritol 2-phosphate = 2-C-methyl-D-erythritol 2,4-cyclic diphosphate + CMP. It participates in isoprenoid biosynthesis; isopentenyl diphosphate biosynthesis via DXP pathway; isopentenyl diphosphate from 1-deoxy-D-xylulose 5-phosphate: step 4/6. Involved in the biosynthesis of isopentenyl diphosphate (IPP) and dimethylallyl diphosphate (DMAPP), two major building blocks of isoprenoid compounds. Catalyzes the conversion of 4-diphosphocytidyl-2-C-methyl-D-erythritol 2-phosphate (CDP-ME2P) to 2-C-methyl-D-erythritol 2,4-cyclodiphosphate (ME-CPP) with a corresponding release of cytidine 5-monophosphate (CMP). This is 2-C-methyl-D-erythritol 2,4-cyclodiphosphate synthase from Chlorobium phaeobacteroides (strain BS1).